Here is a 482-residue protein sequence, read N- to C-terminus: Glycogen synthase 2 (482 aa).

Lys-18 lines the ADP-alpha-D-glucose pocket.

Belongs to the glycosyltransferase 1 family. Bacterial/plant glycogen synthase subfamily.

The enzyme catalyses [(1-&gt;4)-alpha-D-glucosyl](n) + ADP-alpha-D-glucose = [(1-&gt;4)-alpha-D-glucosyl](n+1) + ADP + H(+). The protein operates within glycan biosynthesis; glycogen biosynthesis. Synthesizes alpha-1,4-glucan chains using ADP-glucose. The chain is Glycogen synthase 2 from Bradyrhizobium diazoefficiens (strain JCM 10833 / BCRC 13528 / IAM 13628 / NBRC 14792 / USDA 110).